The chain runs to 637 residues: Biosynthetic arginine decarboxylase (637 aa).

K101 is subject to N6-(pyridoxal phosphate)lysine. Residue 286-296 (FDVGGGLAVDY) participates in substrate binding.

This sequence belongs to the Orn/Lys/Arg decarboxylase class-II family. SpeA subfamily. Requires Mg(2+) as cofactor. Pyridoxal 5'-phosphate is required as a cofactor.

It catalyses the reaction L-arginine + H(+) = agmatine + CO2. It functions in the pathway amine and polyamine biosynthesis; agmatine biosynthesis; agmatine from L-arginine: step 1/1. Catalyzes the biosynthesis of agmatine from arginine. The polypeptide is Biosynthetic arginine decarboxylase (Shewanella sp. (strain ANA-3)).